Here is a 98-residue protein sequence, read N- to C-terminus: UPF0235 protein Ping_3043 (98 aa).

The protein belongs to the UPF0235 family.

In Psychromonas ingrahamii (strain DSM 17664 / CCUG 51855 / 37), this protein is UPF0235 protein Ping_3043.